The sequence spans 146 residues: Snaclec coagulation factor X-activating enzyme light chain 1 (146 aa).

An N-terminal signal peptide occupies residues 1–23; it reads MGRFISVSFGCLVVFLSLSGTEA. The cysteines at positions 27 and 38 are disulfide-linked. In terms of domain architecture, C-type lectin spans 34–145; sequence YEQHCYKGFN…CNFIAPVVCK (112 aa). The N-linked (GlcNAc...) (complex) asparagine glycan is linked to Asn47. 2 disulfides stabilise this stretch: Cys55-Cys144 and Cys121-Cys136.

The protein belongs to the snaclec family. As to quaternary structure, heterotrimer; disulfide-linked. The heterotrimer consists of 1 heavy chain (a metalloproteinase) and 2 light chains: LC1 and LC2. N-glycosylated; probably required for conformation. Removal of easily accessible sugars does not change its functional capacity, but removal of the core sugars with N-glycanase causes a virtually complete loss of enzyme activity, apparently as a result of major conformational changes in the molecule. Not O-glycosylated. In terms of tissue distribution, expressed by the venom gland.

The protein localises to the secreted. Functionally, regulatory subunit of the blood coagulation factor X- and IX-activating enzyme. The enzyme activates coagulation factor X (F10) by cleaving the Arg-Ile bond and is also able to activate coagulation factor IX (F9) and protein S (PROS1) by specific cleavage of Arg-Ile and Arg-Val bonds. May serve as an exosite by which the enzyme recognizes and binds to the Gla domain of factor X (F10) and factor IX (F9) in a calcium-dependent manner. This chain is Snaclec coagulation factor X-activating enzyme light chain 1 (LC1), found in Daboia siamensis (Eastern Russel's viper).